The primary structure comprises 507 residues: Cytochrome P450 71D2 (507 aa).

The next 2 helical transmembrane spans lie at 6–26 (LPFNLVTFFIFLFFVFLLIYG) and 447–467 (ICPGMTFGLANVHLVLALLLY). Cys-448 lines the heme pocket.

Belongs to the cytochrome P450 family.

It localises to the membrane. This chain is Cytochrome P450 71D2, found in Catharanthus roseus (Madagascar periwinkle).